Reading from the N-terminus, the 214-residue chain is Large ribosomal subunit protein uL3 (214 aa).

Positions 131–155 (GAQRTSHGNSRSHRVPGSIGMAQDP) are disordered. Q153 is modified (N5-methylglutamine).

This sequence belongs to the universal ribosomal protein uL3 family. Part of the 50S ribosomal subunit. Forms a cluster with proteins L14 and L19. Methylated by PrmB.

Functionally, one of the primary rRNA binding proteins, it binds directly near the 3'-end of the 23S rRNA, where it nucleates assembly of the 50S subunit. The chain is Large ribosomal subunit protein uL3 from Neisseria meningitidis serogroup C (strain 053442).